A 264-amino-acid polypeptide reads, in one-letter code: 3-methyl-2-oxobutanoate hydroxymethyltransferase (264 aa).

The Mg(2+) site is built by aspartate 45 and aspartate 84. 3-methyl-2-oxobutanoate contacts are provided by residues 45 to 46 (DS), aspartate 84, and lysine 112. Glutamate 114 is a Mg(2+) binding site. Glutamate 181 (proton acceptor) is an active-site residue.

This sequence belongs to the PanB family. As to quaternary structure, homodecamer; pentamer of dimers. The cofactor is Mg(2+).

It localises to the cytoplasm. The enzyme catalyses 3-methyl-2-oxobutanoate + (6R)-5,10-methylene-5,6,7,8-tetrahydrofolate + H2O = 2-dehydropantoate + (6S)-5,6,7,8-tetrahydrofolate. Its pathway is cofactor biosynthesis; (R)-pantothenate biosynthesis; (R)-pantoate from 3-methyl-2-oxobutanoate: step 1/2. Catalyzes the reversible reaction in which hydroxymethyl group from 5,10-methylenetetrahydrofolate is transferred onto alpha-ketoisovalerate to form ketopantoate. The polypeptide is 3-methyl-2-oxobutanoate hydroxymethyltransferase (Shigella sonnei (strain Ss046)).